We begin with the raw amino-acid sequence, 335 residues long: L-threo-3-deoxy-hexylosonate aldolase (335 aa).

50-51 (SN) is a binding site for substrate. Lysine 175 (schiff-base intermediate with substrate) is an active-site residue.

This sequence belongs to the DapA family.

It catalyses the reaction 2-dehydro-3-deoxy-L-galactonate = L-glyceraldehyde + pyruvate. The protein operates within carbohydrate acid metabolism. In terms of biological role, mediates the conversion of 2-dehydro-3-deoxy-L-galactonate to pyruvate and L-glyceraldehyde in D-galacturonate catabolic process. This chain is L-threo-3-deoxy-hexylosonate aldolase (gaaC), found in Aspergillus niger.